We begin with the raw amino-acid sequence, 417 residues long: Phosphoglycerate kinase 1 (417 aa).

Ser-2 bears the N-acetylserine mark. Phosphoserine is present on residues Ser-2 and Ser-4. The segment at 2–186 is globular domain-1; the sequence is SLSNKLTLDK…VGVNLPQKAG (185 aa). Lys-6 bears the N6-succinyllysine mark. Position 11 is an N6-acetyllysine (Lys-11). 6 residues coordinate (2R)-3-phosphoglycerate: Val-23, Asp-24, Phe-25, Asn-26, Gln-38, and Arg-39. Residues 38–43 are mitochondrial targeting region exposed following cis-trans isomerization by PIN1 and recognized by the TOM complex for mitochondrial translocation of the protein; it reads QRIKAA. Lys-48 carries the N6-acetyllysine; alternate modification. Lys-48 carries the N6-succinyllysine; alternate modification. Residues Ser-62, His-63, Gly-65, and Arg-66 each contribute to the (2R)-3-phosphoglycerate site. Lys-75 carries the N6-acetyllysine modification. Tyr-76 carries the phosphotyrosine modification. Residues Lys-86 and Lys-91 each carry the N6-acetyllysine modification. The residue at position 97 (Lys-97) is an N6-acetyllysine; alternate. At Lys-97 the chain carries N6-(2-hydroxyisobutyryl)lysine; alternate. Positions 122 and 123 each coordinate (2R)-3-phosphoglycerate. Lys-131 carries the post-translational modification N6-acetyllysine; alternate. At Lys-131 the chain carries N6-malonyllysine; alternate. At Lys-146 the chain carries N6-acetyllysine. Residues His-170 and Arg-171 each coordinate (2R)-3-phosphoglycerate. The segment at 187–190 is linker; sequence GFLM. Position 191 is an N6-succinyllysine (Lys-191). Positions 191 to 417 are globular domain-2; it reads KKELNYFAKA…LPGVDALSNV (227 aa). Position 196 is a phosphotyrosine (Tyr-196). N6-acetyllysine is present on Lys-199. Ser-203 is subject to Phosphoserine. Gly-214 is a binding site for ADP. Gly-214 lines the CDP pocket. The AMP site is built by Ala-215 and Lys-216. Ala-215 provides a ligand contact to ATP. Ala-215 lines the Mg(2+) pocket. Lys-216 is modified (N6-(2-hydroxyisobutyryl)lysine). 2 residues coordinate Mg(2+): Ala-218 and Asp-219. Residue Asp-219 coordinates CDP. An AMP-binding site is contributed by Lys-220. Residue Lys-220 participates in ATP binding. An N6-(2-hydroxyisobutyryl)lysine modification is found at Lys-220. An ADP-binding site is contributed by Gly-238. Residue Gly-238 participates in CDP binding. Residue Gly-239 participates in AMP binding. Position 239 (Gly-239) interacts with ATP. N6-acetyllysine is present on residues Lys-267 and Lys-291. Gly-313 provides a ligand contact to AMP. ATP is bound at residue Gly-313. Residue Lys-323 is modified to N6-(2-hydroxyisobutyryl)lysine. Positions 338, 340, and 343 each coordinate CDP. Position 343 (Phe-343) interacts with ADP. Residue Glu-344 participates in AMP binding. Residue Glu-344 participates in ATP binding. Lys-361 carries the post-translational modification N6-acetyllysine. ATP is bound by residues Asp-375 and Thr-376. A Mg(2+)-binding site is contributed by Asp-375. The interval 406–417 is associated with globular domain 1; the sequence is KVLPGVDALSNV.

This sequence belongs to the phosphoglycerate kinase family. In terms of assembly, monomer. Interacts with kinase MAPK1/ERK2; the interaction is direct, occurs under hypoxic conditions, and promotes its interaction with PIN1. Interacts with peptidyl-prolyl cis-trans isomerase PIN1; the interaction is direct, occurs under hypoxic conditions, and targets the protein to the mitochondrion by promoting interactions with the TOM complex. Interacts with mitochondrial circRNA mcPGK1 (via its 2nd stem-loop); the interaction is direct and targets the protein to the mitochondrion by promoting interactions with the TOM complex. Interacts with pyruvate dehydrogenase kinase PDK1; the interaction is direct, occurs under hypoxic conditions and leads to PDK1-mediated inhibition of pyruvate dehydrogenase complex activity. Requires Mg(2+) as cofactor. Phosphorylated at Ser-203 by MAPK1/ERK2 under hypoxic conditions, which promotes its mitochondrial targeting.

The protein resides in the cytoplasm. It is found in the cytosol. Its subcellular location is the mitochondrion matrix. It catalyses the reaction (2R)-3-phosphoglycerate + ATP = (2R)-3-phospho-glyceroyl phosphate + ADP. The enzyme catalyses L-seryl-[protein] + ATP = O-phospho-L-seryl-[protein] + ADP + H(+). It functions in the pathway carbohydrate degradation; glycolysis; pyruvate from D-glyceraldehyde 3-phosphate: step 2/5. Its function is as follows. Catalyzes one of the two ATP producing reactions in the glycolytic pathway via the reversible conversion of 1,3-diphosphoglycerate to 3-phosphoglycerate. Both L- and D- forms of purine and pyrimidine nucleotides can be used as substrates, but the activity is much lower on pyrimidines. In addition to its role as a glycolytic enzyme, it seems that PGK-1 acts as a polymerase alpha cofactor protein (primer recognition protein). Acts as a protein kinase when localized to the mitochondrion where it phosphorylates pyruvate dehydrogenase kinase PDK1 to inhibit pyruvate dehydrogenase complex activity and suppress the formation of acetyl-coenzyme A from pyruvate, and consequently inhibit oxidative phosphorylation and promote glycolysis. May play a role in sperm motility. The sequence is that of Phosphoglycerate kinase 1 (PGK1) from Equus caballus (Horse).